Reading from the N-terminus, the 874-residue chain is Leucine--tRNA ligase (874 aa).

The 'HIGH' region signature appears at 47–57 (PYPSGKLHMGH). The 'KMSKS' region signature appears at 636 to 640 (KMSKS). ATP is bound at residue lysine 639.

It belongs to the class-I aminoacyl-tRNA synthetase family.

It is found in the cytoplasm. The catalysed reaction is tRNA(Leu) + L-leucine + ATP = L-leucyl-tRNA(Leu) + AMP + diphosphate. This is Leucine--tRNA ligase from Acinetobacter baumannii (strain AB307-0294).